The primary structure comprises 228 residues: Octanoyltransferase (228 aa).

One can recognise a BPL/LPL catalytic domain in the interval aspartate 32–tryptophan 214. Substrate-binding positions include arginine 77 to histidine 84, serine 144 to glycine 146, and glycine 157 to alanine 159. Residue cysteine 175 is the Acyl-thioester intermediate of the active site.

Belongs to the LipB family.

It is found in the cytoplasm. The catalysed reaction is octanoyl-[ACP] + L-lysyl-[protein] = N(6)-octanoyl-L-lysyl-[protein] + holo-[ACP] + H(+). The protein operates within protein modification; protein lipoylation via endogenous pathway; protein N(6)-(lipoyl)lysine from octanoyl-[acyl-carrier-protein]: step 1/2. Its function is as follows. Catalyzes the transfer of endogenously produced octanoic acid from octanoyl-acyl-carrier-protein onto the lipoyl domains of lipoate-dependent enzymes. Lipoyl-ACP can also act as a substrate although octanoyl-ACP is likely to be the physiological substrate. The protein is Octanoyltransferase of Syntrophobacter fumaroxidans (strain DSM 10017 / MPOB).